A 382-amino-acid polypeptide reads, in one-letter code: Mannitol-1-phosphate 5-dehydrogenase (382 aa).

An NAD(+)-binding site is contributed by A3–G14. K269 is subject to N6-acetyllysine.

Belongs to the mannitol dehydrogenase family.

The catalysed reaction is D-mannitol 1-phosphate + NAD(+) = beta-D-fructose 6-phosphate + NADH + H(+). This Escherichia coli O127:H6 (strain E2348/69 / EPEC) protein is Mannitol-1-phosphate 5-dehydrogenase.